Here is a 221-residue protein sequence, read N- to C-terminus: Superoxide dismutase [Mn] 1, mitochondrial (221 aa).

Residues 1 to 24 constitute a mitochondrion transit peptide; sequence MLQNTVRCVSKLVQPITGVAAVRS. The Mn(2+) site is built by His-50, His-98, Asp-182, and His-186.

This sequence belongs to the iron/manganese superoxide dismutase family. Homotetramer. It depends on Mn(2+) as a cofactor.

The protein resides in the mitochondrion matrix. It carries out the reaction 2 superoxide + 2 H(+) = H2O2 + O2. In terms of biological role, destroys superoxide anion radicals which are normally produced within the cells and which are toxic to biological systems. The chain is Superoxide dismutase [Mn] 1, mitochondrial (sod-2) from Caenorhabditis elegans.